The chain runs to 253 residues: Ciliary microtubule associated protein 1B (253 aa).

An STPGR repeat occupies 182–207 (PGPCAYQVVSPGVYKSRAPQFTILAR).

Belongs to the CIMAP family.

It localises to the cell projection. The protein resides in the cilium. It is found in the flagellum. This chain is Ciliary microtubule associated protein 1B, found in Homo sapiens (Human).